Reading from the N-terminus, the 46-residue chain is Short transmembrane mitochondrial protein 1 (46 aa).

The chain crosses the membrane as a helical span at residues 7 to 23 (GFTLGNVVGMYLAQNYE).

This sequence belongs to the STMP1 family. In terms of tissue distribution, widely expressed. Expressed more abundantly in brain compared with other tissues such as heart, muscle and liver.

Its subcellular location is the mitochondrion inner membrane. The protein resides in the mitochondrion outer membrane. The protein localises to the mitochondrion intermembrane space. Its function is as follows. Microprotein involved in mitochondrial respiratory chain complex III (ubiquinol-cytochrome c oxidoreductase) and complex IV (mitochondrial cytochrome c oxidase complex) assembly. Required for the formation of mitochondrial supercomplexes (SCs). Also required for the activation of the NLRP3 inflammasome. The sequence is that of Short transmembrane mitochondrial protein 1 from Danio rerio (Zebrafish).